A 345-amino-acid chain; its full sequence is MKRFCLWFAVFSLLLVLLPGKAFGAVDFPNTSTNGLLGFAGNAKNEKGISKASTTGGKNGQIVYIQSVNDLKTHLGGSTPKILVLQNDISASSKTTVTIGSNKTLVGSYAKKTLKNIYLTTSSASGNVIFQNLTFEHSPQINGNNDIQLYLDSGINYWIDHVTFSGHSYSASGSDLDKLLYVGKSADYITISNSKFANHKYGLILGYPDDSQHQYDGYPHMTIANNYFENLYVRGPGLMRYGYFHVKNNYSNNFNQAITIATKAKIYSEYNYFGKGSEKGGILDDKGTGYFKDTGSYPSLNKQTSPLTSWNPGSNYSYRVQTPQYTKDFVTKYAGSQSTTLVFGY.

Residues 1-24 form the signal peptide; that stretch reads MKRFCLWFAVFSLLLVLLPGKAFG. The active site involves Arg-234.

Belongs to the polysaccharide lyase 1 family.

It localises to the secreted. It catalyses the reaction Eliminative cleavage of (1-&gt;4)-alpha-D-galacturonan methyl ester to give oligosaccharides with 4-deoxy-6-O-methyl-alpha-D-galact-4-enuronosyl groups at their non-reducing ends.. Its activity is regulated as follows. Inhibited by Hg(2+) and Mn(2+). Not affected by EDTA in vitro. In terms of biological role, catalyzes the depolymerization of pectins of methyl esterification degree from 13 to 75%, with an endo mode of action. Cannot degrade polygalacturonate. Also displays protopectinase activity, i.e. releases pectin from protopectin. The protein is Pectin lyase (pelB) of Bacillus subtilis.